The primary structure comprises 223 residues: 23 kDa piroplasm membrane protein (223 aa).

The first 19 residues, 1-19 (MHKFTKVFFVAILVHTLKS), serve as a signal peptide directing secretion. Residues 20–197 (GLVFTPVSGT…EEEKSDKKKY (178 aa)) lie on the Extracellular side of the membrane. An N-linked (GlcNAc...) asparagine glycan is attached at asparagine 69. A helical membrane pass occupies residues 198 to 218 (VLMVVVVVVFVVVASLVVFLV). Topologically, residues 219-223 (KFCLK) are cytoplasmic.

The protein resides in the membrane. This Theileria buffeli protein is 23 kDa piroplasm membrane protein.